A 130-amino-acid polypeptide reads, in one-letter code: Putative pre-16S rRNA nuclease (130 aa).

The protein belongs to the YqgF nuclease family.

It localises to the cytoplasm. Functionally, could be a nuclease involved in processing of the 5'-end of pre-16S rRNA. This chain is Putative pre-16S rRNA nuclease, found in Sulfurimonas denitrificans (strain ATCC 33889 / DSM 1251) (Thiomicrospira denitrificans (strain ATCC 33889 / DSM 1251)).